Here is a 139-residue protein sequence, read N- to C-terminus: Large-conductance mechanosensitive channel (139 aa).

Transmembrane regions (helical) follow at residues 16–36 (VIDL…VKSL) and 79–99 (GAFV…FLLV).

Belongs to the MscL family. In terms of assembly, homopentamer.

The protein localises to the cell inner membrane. Its function is as follows. Channel that opens in response to stretch forces in the membrane lipid bilayer. May participate in the regulation of osmotic pressure changes within the cell. The chain is Large-conductance mechanosensitive channel from Caulobacter vibrioides (strain ATCC 19089 / CIP 103742 / CB 15) (Caulobacter crescentus).